The following is a 356-amino-acid chain: uncharacterized protein (356 aa).

6 consecutive transmembrane segments (helical) span residues 7-29 (LLSR…VSLY), 49-71 (YFLN…ISLI), 91-113 (ISPL…TFLL), 270-292 (LFYR…YLFF), 299-316 (QVIP…LVIL), and 329-348 (VLYS…KGVY).

The protein localises to the cell membrane. This is an uncharacterized protein from Aquifex aeolicus (strain VF5).